The primary structure comprises 510 residues: MIWHVQNENFILDSTRIFMKAFHLLLFHGSFIFPECILIFGLILLLMIDSTSDQKDRPWFYFISSTSLVMSITALLFRWKEEPIISFSGNFQTNNFNEIFQFLILLCSTLCIPLSVEYIECTEMAITEFLLFVLTATLGGMFLCGANDXITIFVAPECFSLCSYLLSGYTKRDVRSNEATTKYLLMGGASSSILVHGFSWLYGSSGGEIELQEIVNGLINTQMYNSPGISIALISITVGIGFKLSPAPFHQWTPDVYEGSPTPVVAFLSVTSKVAASASATRIFDIPFYFSSNEWHLLLEILAILSMILGNLIAITQTSMKRMLAYSSIGQIGYVIIGIIVGDSNDGYASMITYMLFYISMNLGTFARIVSFGLRTGTDNIRDYAGLYTKDPFLALSSALCLLSLGGLPPLAGFFGKLHLFWCGWQAGLYFLVSIGLLTSVVSIYYYLKIIKLLMTGRNQEITPHVRNYRRSPLKSNNSIEWSMTVCVIAXTIPGISMNPILAIAQDTLF.

The next 13 membrane-spanning stretches (helical) occupy residues 24-44, 59-79, 99-119, 124-144, 149-169, 183-203, 229-249, 295-315, 323-343, 347-367, 395-415, 418-438, and 484-504; these read LLLF…GLIL, WFYF…LFRW, IFQF…VEYI, MAIT…MFLC, XITI…LSGY, YLLM…WLYG, ISIA…PAPF, WHLL…LIAI, MLAY…IVGD, GYAS…GTFA, ALSS…AGFF, LHLF…IGLL, and MTVC…ILAI.

Belongs to the complex I subunit 2 family. As to quaternary structure, NDH is composed of at least 16 different subunits, 5 of which are encoded in the nucleus.

It is found in the plastid. It localises to the chloroplast thylakoid membrane. The catalysed reaction is a plastoquinone + NADH + (n+1) H(+)(in) = a plastoquinol + NAD(+) + n H(+)(out). The enzyme catalyses a plastoquinone + NADPH + (n+1) H(+)(in) = a plastoquinol + NADP(+) + n H(+)(out). Functionally, NDH shuttles electrons from NAD(P)H:plastoquinone, via FMN and iron-sulfur (Fe-S) centers, to quinones in the photosynthetic chain and possibly in a chloroplast respiratory chain. The immediate electron acceptor for the enzyme in this species is believed to be plastoquinone. Couples the redox reaction to proton translocation, and thus conserves the redox energy in a proton gradient. The chain is NAD(P)H-quinone oxidoreductase subunit 2, chloroplastic from Narcissus elegans (Daffodil).